Consider the following 155-residue polypeptide: Xanthine-guanine phosphoribosyltransferase (155 aa).

Residues 37-38 (RG), Arg69, and 90-98 (DDLVDTGGT) contribute to the 5-phospho-alpha-D-ribose 1-diphosphate site. Position 69 (Arg69) interacts with GMP. Residue Asp91 participates in Mg(2+) binding. The guanine site is built by Asp94 and Ile137. Xanthine is bound by residues Asp94 and Ile137. Residues 94–98 (DTGGT) and 136–137 (WI) each bind GMP.

Belongs to the purine/pyrimidine phosphoribosyltransferase family. XGPT subfamily. Homotetramer. Mg(2+) serves as cofactor.

It localises to the cell inner membrane. It catalyses the reaction GMP + diphosphate = guanine + 5-phospho-alpha-D-ribose 1-diphosphate. The enzyme catalyses XMP + diphosphate = xanthine + 5-phospho-alpha-D-ribose 1-diphosphate. It carries out the reaction IMP + diphosphate = hypoxanthine + 5-phospho-alpha-D-ribose 1-diphosphate. The protein operates within purine metabolism; GMP biosynthesis via salvage pathway; GMP from guanine: step 1/1. It participates in purine metabolism; XMP biosynthesis via salvage pathway; XMP from xanthine: step 1/1. Functionally, purine salvage pathway enzyme that catalyzes the transfer of the ribosyl-5-phosphate group from 5-phospho-alpha-D-ribose 1-diphosphate (PRPP) to the N9 position of the 6-oxopurines guanine and xanthine to form the corresponding ribonucleotides GMP (guanosine 5'-monophosphate) and XMP (xanthosine 5'-monophosphate), with the release of PPi. To a lesser extent, also acts on hypoxanthine. The chain is Xanthine-guanine phosphoribosyltransferase from Aeromonas salmonicida (strain A449).